A 257-amino-acid polypeptide reads, in one-letter code: Imidazole glycerol phosphate synthase subunit HisF (257 aa).

Residues Asp-11 and Asp-130 contribute to the active site.

This sequence belongs to the HisA/HisF family. As to quaternary structure, heterodimer of HisH and HisF.

It localises to the cytoplasm. The catalysed reaction is 5-[(5-phospho-1-deoxy-D-ribulos-1-ylimino)methylamino]-1-(5-phospho-beta-D-ribosyl)imidazole-4-carboxamide + L-glutamine = D-erythro-1-(imidazol-4-yl)glycerol 3-phosphate + 5-amino-1-(5-phospho-beta-D-ribosyl)imidazole-4-carboxamide + L-glutamate + H(+). The protein operates within amino-acid biosynthesis; L-histidine biosynthesis; L-histidine from 5-phospho-alpha-D-ribose 1-diphosphate: step 5/9. IGPS catalyzes the conversion of PRFAR and glutamine to IGP, AICAR and glutamate. The HisF subunit catalyzes the cyclization activity that produces IGP and AICAR from PRFAR using the ammonia provided by the HisH subunit. This is Imidazole glycerol phosphate synthase subunit HisF from Shewanella sp. (strain MR-7).